The primary structure comprises 640 residues: Biosynthetic arginine decarboxylase (640 aa).

Lys105 carries the N6-(pyridoxal phosphate)lysine modification. Substrate is bound at residue 290–300 (FDVGGGLAIDY).

This sequence belongs to the Orn/Lys/Arg decarboxylase class-II family. SpeA subfamily. Requires Mg(2+) as cofactor. It depends on pyridoxal 5'-phosphate as a cofactor.

It carries out the reaction L-arginine + H(+) = agmatine + CO2. Catalyzes the biosynthesis of agmatine from arginine. This Vibrio vulnificus (strain CMCP6) protein is Biosynthetic arginine decarboxylase.